The following is a 610-amino-acid chain: MSDQFDAKAFLKTVTSQPGVYRMYDAGGTVIYVGKAKDLKKRLSSYFRSNLASRKTEALVAQIQQIDVTVTHTETEALLLEHNYIKLYQPRYNVLLRDDKSYPFIFLSGDTHPRLAMHRGAKHAKGEYFGPFPNGYAVRETLALLQKIFPIRQCENSVYRNRSRPCLQYQIGRCLGPCVEGLVSEEEYAQQVEYVRLFLSGKDDQVLTQLISRMETASQNLEFEEAARIRDQIQAVRRVTEKQFVSNTGDDLDVIGVAFDAGMACVHVLFIRQGKVLGSRSYFPKVPGGTELSEVVETFVGQFYLQGSQMRTLPGEILLDFNLSDKTLLADSLSELAGRKINVQTKPRGDRARYLKLARTNAATALTSKLSQQSTVHQRLTALASVLKLPEVKRMECFDISHTMGEQTVASCVVFDANGPLRAEYRRYNITGITPGDDYAAMNQVLRRRYGKAIDDSKIPDVILIDGGKGQLAQAKNVFAELDVSWDKNHPLLLGVAKGVDRKAGLETLFFEPEGEGFSLPPDSPALHVIQHIRDESHDHAIGGHRKKRAKVKNTSSLETIEGVGPKRRQMLLKYMGGLQGLRNASVEEIAKVPGISQGLAEKIFWSLKH.

Residues 16–94 (SQPGVYRMYD…IKLYQPRYNV (79 aa)) form the GIY-YIG domain. In terms of domain architecture, UVR spans 204–239 (DQVLTQLISRMETASQNLEFEEAARIRDQIQAVRRV).

The protein belongs to the UvrC family. As to quaternary structure, interacts with UvrB in an incision complex.

The protein localises to the cytoplasm. The UvrABC repair system catalyzes the recognition and processing of DNA lesions. UvrC both incises the 5' and 3' sides of the lesion. The N-terminal half is responsible for the 3' incision and the C-terminal half is responsible for the 5' incision. This Escherichia coli (strain ATCC 8739 / DSM 1576 / NBRC 3972 / NCIMB 8545 / WDCM 00012 / Crooks) protein is UvrABC system protein C.